Here is a 359-residue protein sequence, read N- to C-terminus: Phospho-N-acetylmuramoyl-pentapeptide-transferase (359 aa).

10 helical membrane-spanning segments follow: residues 3 to 23 (QILI…PVLI), 55 to 75 (VAIV…GVVI), 84 to 104 (GLLV…DDLI), 117 to 137 (TAKT…ALQF), 156 to 176 (IATV…VVSA), 190 to 210 (LAAG…FWQF), 231 to 251 (LAII…WNAA), 255 to 275 (IFMG…LSVT), 283 to 303 (VVLG…ILAF), and 330 to 350 (VIIR…ALFY).

This sequence belongs to the glycosyltransferase 4 family. MraY subfamily. Mg(2+) serves as cofactor.

The protein resides in the cell membrane. The enzyme catalyses UDP-N-acetyl-alpha-D-muramoyl-L-alanyl-gamma-D-glutamyl-meso-2,6-diaminopimeloyl-D-alanyl-D-alanine + di-trans,octa-cis-undecaprenyl phosphate = di-trans,octa-cis-undecaprenyl diphospho-N-acetyl-alpha-D-muramoyl-L-alanyl-D-glutamyl-meso-2,6-diaminopimeloyl-D-alanyl-D-alanine + UMP. The protein operates within cell wall biogenesis; peptidoglycan biosynthesis. Catalyzes the initial step of the lipid cycle reactions in the biosynthesis of the cell wall peptidoglycan: transfers peptidoglycan precursor phospho-MurNAc-pentapeptide from UDP-MurNAc-pentapeptide onto the lipid carrier undecaprenyl phosphate, yielding undecaprenyl-pyrophosphoryl-MurNAc-pentapeptide, known as lipid I. The sequence is that of Phospho-N-acetylmuramoyl-pentapeptide-transferase from Mycolicibacterium vanbaalenii (strain DSM 7251 / JCM 13017 / BCRC 16820 / KCTC 9966 / NRRL B-24157 / PYR-1) (Mycobacterium vanbaalenii).